The chain runs to 421 residues: Diaminobutyrate--2-oxoglutarate transaminase (421 aa).

Lys-267 is modified (N6-(pyridoxal phosphate)lysine).

This sequence belongs to the class-III pyridoxal-phosphate-dependent aminotransferase family. As to quaternary structure, homohexamer. Pyridoxal 5'-phosphate is required as a cofactor.

It catalyses the reaction L-2,4-diaminobutanoate + 2-oxoglutarate = L-aspartate 4-semialdehyde + L-glutamate. Its pathway is amine and polyamine biosynthesis; ectoine biosynthesis; L-ectoine from L-aspartate 4-semialdehyde: step 1/3. In terms of biological role, catalyzes reversively the conversion of L-aspartate beta-semialdehyde (ASA) to L-2,4-diaminobutyrate (DABA) by transamination with L-glutamate. Seems to use L-glutamate specifically as the amino group donor to ASA, as it is not active with L-alanine, L-glutamine, L-aspartate and L-lysine, and is only poorly active with L-homoserine. In the reverse reaction, gamma-aminobutyric acid (GABA) and L-ornithine can also be used as amino group donors to 2-oxoglutarate, but with a reduced activity compared to that with DABA. The chain is Diaminobutyrate--2-oxoglutarate transaminase (ectB) from Halomonas elongata (strain ATCC 33173 / DSM 2581 / NBRC 15536 / NCIMB 2198 / 1H9).